A 369-amino-acid polypeptide reads, in one-letter code: Arsenite methyltransferase (369 aa).

The residue at position 46 (Ser46) is a Phosphoserine.

This sequence belongs to the methyltransferase superfamily. Arsenite methyltransferase family.

It localises to the cytoplasm. Its subcellular location is the cytosol. It catalyses the reaction arsenic triglutathione + [thioredoxin]-dithiol + S-adenosyl-L-methionine + 2 H2O = methylarsonous acid + [thioredoxin]-disulfide + 3 glutathione + S-adenosyl-L-homocysteine + H(+). It carries out the reaction arsenic triglutathione + 2 [thioredoxin]-dithiol + 2 S-adenosyl-L-methionine + H2O = dimethylarsinous acid + 2 [thioredoxin]-disulfide + 3 glutathione + 2 S-adenosyl-L-homocysteine + 2 H(+). The enzyme catalyses arsenic triglutathione + 3 [thioredoxin]-dithiol + 3 S-adenosyl-L-methionine = trimethylarsine + 3 [thioredoxin]-disulfide + 3 glutathione + 3 S-adenosyl-L-homocysteine + 3 H(+). Its function is as follows. Catalyzes the transfer of a methyl group from AdoMet to trivalent arsenicals producing methylated and dimethylated arsenicals. It methylates arsenite to form methylarsonate, Me-AsO(3)H(2), which is reduced by methylarsonate reductase to methylarsonite, Me-As(OH)2. Methylarsonite is also a substrate and it is converted into the much less toxic compound dimethylarsinate (cacodylate), Me(2)As(O)-OH. In Rattus norvegicus (Rat), this protein is Arsenite methyltransferase (As3mt).